A 258-amino-acid chain; its full sequence is Phosphate import ATP-binding protein PstB 2 (258 aa).

One can recognise an ABC transporter domain in the interval 12-253 (IQVRDLNFYY…PQQKQTEDYI (242 aa)). 44–51 (GPSGCGKS) is a binding site for ATP.

The protein belongs to the ABC transporter superfamily. Phosphate importer (TC 3.A.1.7) family. As to quaternary structure, the complex is composed of two ATP-binding proteins (PstB), two transmembrane proteins (PstC and PstA) and a solute-binding protein (PstS).

The protein resides in the cell inner membrane. The enzyme catalyses phosphate(out) + ATP + H2O = ADP + 2 phosphate(in) + H(+). In terms of biological role, part of the ABC transporter complex PstSACB involved in phosphate import. Responsible for energy coupling to the transport system. This Yersinia pestis bv. Antiqua (strain Nepal516) protein is Phosphate import ATP-binding protein PstB 2.